Here is a 703-residue protein sequence, read N- to C-terminus: Protein O-mannosyl-transferase TMEM260 (703 aa).

The next 8 helical transmembrane spans lie at 20-40 (GALR…TLTL), 68-88 (PLFT…SVAY), 90-110 (VNLL…YTVF), 137-157 (IAAE…ALTV), 182-202 (SLCN…WILF), 218-238 (LTLA…SSYL), 314-334 (KSSV…FFAW), and 352-372 (FWLQ…ATLV). N-linked (GlcNAc...) asparagine glycosylation is found at N403 and N564.

This sequence belongs to the glycosyltransferase 117 (GT117) family.

Its subcellular location is the endoplasmic reticulum membrane. The catalysed reaction is a di-trans,poly-cis-dolichyl beta-D-mannosyl phosphate + L-seryl-[protein] = 3-O-(alpha-D-mannosyl)-L-seryl-[protein] + a di-trans,poly-cis-dolichyl phosphate + H(+). The enzyme catalyses a di-trans,poly-cis-dolichyl beta-D-mannosyl phosphate + L-threonyl-[protein] = 3-O-(alpha-D-mannosyl)-L-threonyl-[protein] + a di-trans,poly-cis-dolichyl phosphate + H(+). In terms of biological role, O-mannosyl-transferase that transfers mannosyl residues to the hydroxyl group of serine or threonine residues of proteins. Specifically glycosylates the IPT/TIG domain of target proteins, such as MET and MST1R/RON. TMEM260-mediated O-mannosylated residues are composed of single mannose glycans that are not elongated or modified. This Mus musculus (Mouse) protein is Protein O-mannosyl-transferase TMEM260.